We begin with the raw amino-acid sequence, 247 residues long: uncharacterized protein (247 aa).

The next 2 membrane-spanning stretches (helical) occupy residues 11-31 (LIAP…IYCV) and 39-59 (FIAI…TGLL).

The protein resides in the cell membrane. This is an uncharacterized protein from Haemophilus influenzae (strain ATCC 51907 / DSM 11121 / KW20 / Rd).